Reading from the N-terminus, the 207-residue chain is MERKERLRAGIAAMGLDISETAQDRLLVYVDLLKKWNKTYNLTALRDEEKMIVHHLLDSLTLLPHIEGVQTMLDVGSGGGQPGIPAAVCRPDVQITLLDANTKKTAFLQQAVIELGLDNVRVVSGRVEAVSDVRADVVTSRAFAELADFVSWTVHLLKDGGYWAAMKGVYPQEEIGRLPQDVCVEKVQRLDVPGLDAERHIVILSKR.

Residues Gly76, Gln81, 127–128 (VE), and Arg141 contribute to the S-adenosyl-L-methionine site.

Belongs to the methyltransferase superfamily. RNA methyltransferase RsmG family.

It localises to the cytoplasm. It catalyses the reaction guanosine(527) in 16S rRNA + S-adenosyl-L-methionine = N(7)-methylguanosine(527) in 16S rRNA + S-adenosyl-L-homocysteine. Functionally, specifically methylates the N7 position of guanine in position 527 of 16S rRNA. The polypeptide is Ribosomal RNA small subunit methyltransferase G (Neisseria meningitidis serogroup B (strain ATCC BAA-335 / MC58)).